The primary structure comprises 72 residues: Translation initiation factor IF-1 (72 aa).

The S1-like domain occupies 1-72; sequence MAKEESIEVE…SKGRITYRYK (72 aa).

The protein belongs to the IF-1 family. As to quaternary structure, component of the 30S ribosomal translation pre-initiation complex which assembles on the 30S ribosome in the order IF-2 and IF-3, IF-1 and N-formylmethionyl-tRNA(fMet); mRNA recruitment can occur at any time during PIC assembly.

It is found in the cytoplasm. Functionally, one of the essential components for the initiation of protein synthesis. Stabilizes the binding of IF-2 and IF-3 on the 30S subunit to which N-formylmethionyl-tRNA(fMet) subsequently binds. Helps modulate mRNA selection, yielding the 30S pre-initiation complex (PIC). Upon addition of the 50S ribosomal subunit IF-1, IF-2 and IF-3 are released leaving the mature 70S translation initiation complex. In Chlorobaculum tepidum (strain ATCC 49652 / DSM 12025 / NBRC 103806 / TLS) (Chlorobium tepidum), this protein is Translation initiation factor IF-1.